The chain runs to 343 residues: Palmitoyltransferase ZDHHC4 (343 aa).

Topologically, residues 1–2 are lumenal; the sequence is MD. The helical transmembrane segment at 3–23 threads the bilayer; sequence FLVLFLFYLAFLLICVVLICI. The Cytoplasmic segment spans residues 24–67; the sequence is FTKSQRLKAVVLGGAQVCSRVIPQCLQRAVQTLLHQLFHTRHPT. A helical membrane pass occupies residues 68 to 88; sequence FIVLHLLLQGLVYAEYTCEVF. Topologically, residues 89–100 are lumenal; it reads GYCRELEFSLPY. A helical membrane pass occupies residues 101–121; it reads LLLPYVLLSVNLVFFTLTCAA. Residues 122 to 193 lie on the Cytoplasmic side of the membrane; that stretch reads NPGTITKANE…NCIGAWNTRY (72 aa). In terms of domain architecture, DHHC spans 149–199; the sequence is SRCPTCDLRKPARSKHCRLCDRCVHRFDHHCVWVNNCIGAWNTRYFLIYLL. The active-site S-palmitoyl cysteine intermediate is the Cys-179. The helical transmembrane segment at 194-214 threads the bilayer; it reads FLIYLLTLTASAATIATVTAA. Residues 215–255 are Lumenal-facing; the sequence is FLLRLVTVSDLYQETYLDDVGHFQAVDTVFLIQHLFLAFPR. The chain crosses the membrane as a helical span at residues 256–276; sequence IVFLLGFVIVLSMLLAGYLCF. Over 277–343 the chain is Cytoplasmic; it reads ALYLAATNQT…ATPSYKKKEK (67 aa). The short motif at 340 to 343 is the Di-lysine motif element; it reads KKEK.

The protein belongs to the DHHC palmitoyltransferase family. In terms of assembly, interacts with CPT1A.

It localises to the endoplasmic reticulum membrane. The protein localises to the golgi apparatus membrane. Its subcellular location is the cell membrane. It carries out the reaction L-cysteinyl-[protein] + hexadecanoyl-CoA = S-hexadecanoyl-L-cysteinyl-[protein] + CoA. Palmitoyltransferase that could catalyze the addition of palmitate onto protein substrates including the D(2) dopamine receptor DRD2, GSK3B or MAVS. Mediates GSK3B palmitoylation to prevent its AKT1-mediated phosphorylation leading to activation of the STAT3 signaling pathway. Also catalyzes MAVS palmitoylation which promotes its stabilization and activation by inhibiting 'Lys-48'- but facilitating 'Lys-63'-linked ubiquitination. This chain is Palmitoyltransferase ZDHHC4, found in Mus musculus (Mouse).